The following is a 248-amino-acid chain: Leucyl/phenylalanyl-tRNA--protein transferase (248 aa).

This sequence belongs to the L/F-transferase family.

The protein localises to the cytoplasm. The catalysed reaction is N-terminal L-lysyl-[protein] + L-leucyl-tRNA(Leu) = N-terminal L-leucyl-L-lysyl-[protein] + tRNA(Leu) + H(+). It catalyses the reaction N-terminal L-arginyl-[protein] + L-leucyl-tRNA(Leu) = N-terminal L-leucyl-L-arginyl-[protein] + tRNA(Leu) + H(+). The enzyme catalyses L-phenylalanyl-tRNA(Phe) + an N-terminal L-alpha-aminoacyl-[protein] = an N-terminal L-phenylalanyl-L-alpha-aminoacyl-[protein] + tRNA(Phe). Its function is as follows. Functions in the N-end rule pathway of protein degradation where it conjugates Leu, Phe and, less efficiently, Met from aminoacyl-tRNAs to the N-termini of proteins containing an N-terminal arginine or lysine. The polypeptide is Leucyl/phenylalanyl-tRNA--protein transferase (Rhizorhabdus wittichii (strain DSM 6014 / CCUG 31198 / JCM 15750 / NBRC 105917 / EY 4224 / RW1) (Sphingomonas wittichii)).